A 146-amino-acid polypeptide reads, in one-letter code: 3-dehydroquinate dehydratase (146 aa).

The active-site Proton acceptor is Y23. Substrate-binding residues include N74, H80, and D87. The active-site Proton donor is the H100. Substrate is bound by residues 101 to 102 (IS) and R111.

Belongs to the type-II 3-dehydroquinase family. As to quaternary structure, homododecamer.

It catalyses the reaction 3-dehydroquinate = 3-dehydroshikimate + H2O. It participates in metabolic intermediate biosynthesis; chorismate biosynthesis; chorismate from D-erythrose 4-phosphate and phosphoenolpyruvate: step 3/7. Functionally, catalyzes a trans-dehydration via an enolate intermediate. The protein is 3-dehydroquinate dehydratase of Bacillus cereus (strain B4264).